A 345-amino-acid polypeptide reads, in one-letter code: uncharacterized protein (345 aa).

Helical transmembrane passes span valine 9 to valine 31, threonine 84 to leucine 103, tyrosine 116 to threonine 138, valine 148 to phenylalanine 170, valine 182 to alanine 204, tryptophan 269 to glycine 286, isoleucine 291 to tyrosine 308, and histidine 313 to isoleucine 335.

The protein resides in the cell membrane. This is an uncharacterized protein from Treponema pallidum (strain Nichols).